The chain runs to 241 residues: DNA repair protein RecO (241 aa).

It belongs to the RecO family.

Functionally, involved in DNA repair and RecF pathway recombination. The protein is DNA repair protein RecO of Orientia tsutsugamushi (strain Ikeda) (Rickettsia tsutsugamushi).